The sequence spans 428 residues: C4-dicarboxylate transport protein (428 aa).

8 consecutive transmembrane segments (helical) span residues 8-28, 44-64, 78-98, 148-168, 184-204, 222-242, 307-327, and 355-375; these read VLYV…HYYP, LIKM…IAGM, LLYF…ATHI, GEIL…AHLG, VLFG…FGAM, LIGT…GAIA, IYMT…LTWM, and AATL…ILGI.

Belongs to the dicarboxylate/amino acid:cation symporter (DAACS) (TC 2.A.23) family.

Its subcellular location is the cell inner membrane. Functionally, responsible for the transport of dicarboxylates such as succinate, fumarate, and malate from the periplasm across the membrane. This Burkholderia mallei (strain ATCC 23344) protein is C4-dicarboxylate transport protein.